We begin with the raw amino-acid sequence, 419 residues long: MHNIKKIRNDVEAFKKALNKRFIEIDVDKILSLDENNRDYIQQRELLEKEKKDISKSKDQSLFEKSKKITVEIDNISKLQAGVKNELETILSSIPNIPHPDVPTGKDENSNVEISKSGTIPNFKFKPKSHYELGENLNMLDFDLATKTTGSRFVFVKDKLAMLERALSNFMLDTHVNTNGYEEISPPLIATDATMYGTGQLPKFDNDQFELKLDDSSDRKFLIPTAEVILTNIVKDQIIDKKKLPMRMVASTPCFRKEAGSYGKDTKGMIRQHQFYKVEMVSIVEIDKCLPELDRMTDCATKILDLLKLPYRKIVLCTGDMGFSAEKTFDIEVWLPSEDKYREISSCSSCGSFQARRMKARYKNEKKETVLVGTLNGSGLAVGRTLVAILENYQQEDGSILVPEALKPYMNNIEKIVKI.

225-227 is a binding site for L-serine; the sequence is TAE. Position 256–258 (256–258) interacts with ATP; that stretch reads RKE. Residue Glu-279 participates in L-serine binding. An ATP-binding site is contributed by 343-346; that stretch reads EISS. Ser-378 provides a ligand contact to L-serine.

Belongs to the class-II aminoacyl-tRNA synthetase family. Type-1 seryl-tRNA synthetase subfamily. Homodimer. The tRNA molecule binds across the dimer.

It is found in the cytoplasm. The catalysed reaction is tRNA(Ser) + L-serine + ATP = L-seryl-tRNA(Ser) + AMP + diphosphate + H(+). It carries out the reaction tRNA(Sec) + L-serine + ATP = L-seryl-tRNA(Sec) + AMP + diphosphate + H(+). Its pathway is aminoacyl-tRNA biosynthesis; selenocysteinyl-tRNA(Sec) biosynthesis; L-seryl-tRNA(Sec) from L-serine and tRNA(Sec): step 1/1. Functionally, catalyzes the attachment of serine to tRNA(Ser). Is also able to aminoacylate tRNA(Sec) with serine, to form the misacylated tRNA L-seryl-tRNA(Sec), which will be further converted into selenocysteinyl-tRNA(Sec). The chain is Serine--tRNA ligase from Pelagibacter ubique (strain HTCC1062).